Reading from the N-terminus, the 78-residue chain is Acyl carrier protein (78 aa).

The Carrier domain occupies 2–77; it reads SNIEQQVKKI…LAIDYINAHN (76 aa). Ser-37 is modified (O-(pantetheine 4'-phosphoryl)serine).

This sequence belongs to the acyl carrier protein (ACP) family. Post-translationally, 4'-phosphopantetheine is transferred from CoA to a specific serine of apo-ACP by AcpS. This modification is essential for activity because fatty acids are bound in thioester linkage to the sulfhydryl of the prosthetic group.

It localises to the cytoplasm. It functions in the pathway lipid metabolism; fatty acid biosynthesis. Functionally, carrier of the growing fatty acid chain in fatty acid biosynthesis. The protein is Acyl carrier protein of Neisseria meningitidis serogroup C / serotype 2a (strain ATCC 700532 / DSM 15464 / FAM18).